We begin with the raw amino-acid sequence, 233 residues long: Modulator of macroautophagy TMEM150B (233 aa).

The Cytoplasmic segment spans residues 1–7 (MWGYLSL). A helical transmembrane segment spans residues 8–28 (MPVFLAVWAISGVWIVFAIAV). At 29–51 (TNRTVDLSKGFPYISICGSFPPQ) the chain is on the extracellular side. Asn30 carries an N-linked (GlcNAc...) asparagine glycan. A helical transmembrane segment spans residues 52-72 (SCIFSQVLNMGAALAAWICIV). At 73-84 (RYHQLRDWGVRR) the chain is on the cytoplasmic side. Residues 85–105 (WPNQLILWTGLLCALGTSVVG) form a helical membrane-spanning segment. At 106–116 (NFQEKNQRPTH) the chain is on the extracellular side. The chain crosses the membrane as a helical span at residues 117-137 (LAGAFLAFILGNVYFWLQLLL). Topologically, residues 138-155 (WRLKRLPQPGAAWIGPLR) are cytoplasmic. A helical membrane pass occupies residues 156–176 (LGLCSVCTILIVAMIVLHACS). The Extracellular segment spans residues 177–185 (LRSVSAACE). A helical membrane pass occupies residues 186–206 (WVVAMLLFALFGLLAVDFSAL). Residues 207-233 (ESCTLCVQPWPSLSPPPASPISLPVQL) are Cytoplasmic-facing.

This sequence belongs to the DRAM/TMEM150 family. In terms of tissue distribution, highly expressed in the colon and lung with comparatively high levels also detectable in the lymph nodes, placenta, duodenum, peripheral blood mononuclear cells and spleen.

It localises to the cell membrane. Its subcellular location is the endosome membrane. The protein resides in the cytoplasmic vesicle. It is found in the autophagosome membrane. Its function is as follows. Modulator of macroautophagy that causes accumulation of autophagosomes under basal conditions and enhances autophagic flux. Represses cell death and promotes long-term clonogenic survival of cells grown in the absence of glucose in a macroautophagy-independent manner. May have some role in extracellular matrix engulfment or growth factor receptor recycling, both of which can modulate cell survival. The chain is Modulator of macroautophagy TMEM150B from Homo sapiens (Human).